The chain runs to 468 residues: RUS family member 1 (468 aa).

A2 bears the N-acetylalanine mark. A Phosphothreonine modification is found at T49. The chain crosses the membrane as a helical span at residues 247–267 (LLMLPLVSGCPGFSLGCFFFL).

The protein belongs to the RUS1 family.

The protein localises to the membrane. The protein is RUS family member 1 of Homo sapiens (Human).